The primary structure comprises 66 residues: Putative inactive (E)-beta-ocimene synthase, chloroplastic (66 aa).

The transit peptide at 1 to 25 directs the protein to the chloroplast; that stretch reads MAAHNLCFNSAFVCNVHHQKTQHFP.

Belongs to the terpene synthase family. Tpsb subfamily. In terms of tissue distribution, expressed exclusively in flowers.

The protein resides in the plastid. It is found in the chloroplast. The chain is Putative inactive (E)-beta-ocimene synthase, chloroplastic (TPS02) from Arabidopsis thaliana (Mouse-ear cress).